We begin with the raw amino-acid sequence, 214 residues long: Ribosomal protein uL16-like (214 aa).

This sequence belongs to the universal ribosomal protein uL16 family. Component of a male germ cell-specific 60S large ribosomal subunit (LSU), which contains RPL10L and RPL39L, instead of RPL10 and RPL39 paralogs. The composition of the rest of the complex is similar to classical ribosomes. Almost testis-specific. Also expressed in pre- and postmenopausal ovary.

It is found in the cytoplasm. Functionally, testis-specific component of the ribosome, which is required for the transition from prophase to metaphase in male meiosis I. Compensates for the inactivated X-linked RPL10 paralog during spermatogenesis. The ribosome is a large ribonucleoprotein complex responsible for the synthesis of proteins in the cell. The male germ cell-specific ribosome displays a ribosomal polypeptide exit tunnel of distinct size and charge states compared with the classical ribosome. It is responsible for regulating the biosynthesis and folding of a subset of male germ-cell-specific proteins that are essential for the formation of sperm. In Homo sapiens (Human), this protein is Ribosomal protein uL16-like.